We begin with the raw amino-acid sequence, 226 residues long: 7-cyano-7-deazaguanine synthase (226 aa).

10 to 20 (LSGGLDSATAA) lines the ATP pocket. Residues C191, C199, C202, and C205 each contribute to the Zn(2+) site.

This sequence belongs to the QueC family. Zn(2+) is required as a cofactor.

The catalysed reaction is 7-carboxy-7-deazaguanine + NH4(+) + ATP = 7-cyano-7-deazaguanine + ADP + phosphate + H2O + H(+). It participates in purine metabolism; 7-cyano-7-deazaguanine biosynthesis. In terms of biological role, catalyzes the ATP-dependent conversion of 7-carboxy-7-deazaguanine (CDG) to 7-cyano-7-deazaguanine (preQ(0)). This chain is 7-cyano-7-deazaguanine synthase, found in Synechococcus sp. (strain CC9902).